The primary structure comprises 148 residues: Putative ankyrin repeat protein RF_1158 (148 aa).

The stretch at 82 to 115 is one ANK repeat; sequence RPTTALGIAIAQGNSEEVIKYLLANGADPKLAFD.

The polypeptide is Putative ankyrin repeat protein RF_1158 (Rickettsia felis (strain ATCC VR-1525 / URRWXCal2) (Rickettsia azadi)).